The following is a 185-amino-acid chain: Ribosome-recycling factor (185 aa).

This sequence belongs to the RRF family.

It is found in the cytoplasm. In terms of biological role, responsible for the release of ribosomes from messenger RNA at the termination of protein biosynthesis. May increase the efficiency of translation by recycling ribosomes from one round of translation to another. The sequence is that of Ribosome-recycling factor from Salmonella arizonae (strain ATCC BAA-731 / CDC346-86 / RSK2980).